Here is a 387-residue protein sequence, read N- to C-terminus: Lymphocyte transmembrane adapter 1 (387 aa).

Topologically, residues 1–37 are extracellular; that stretch reads MDVTTSAWSETTRRISEPSTLQGTLGSLDKAEDHSSS. Residues 38 to 58 traverse the membrane as a helical; Signal-anchor for type III membrane protein segment; sequence IFSGFAALLAILLVVAVICVL. Over 59–387 the chain is Cytoplasmic; that stretch reads WCCGKRKKRQ…VCAAEAGARG (329 aa). The segment at 114–136 is disordered; the sequence is VSTESLLSRNSDSPSSEHVPSRA. The span at 118-129 shows a compositional bias: low complexity; the sequence is SLLSRNSDSPSS. Tyr-195 carries the phosphotyrosine modification. The tract at residues 230 to 268 is disordered; that stretch reads SEEIDEGCGNASDCTSLGSPGTENSDPLSDGEGSSQTSN. Over residues 241–268 the composition is skewed to polar residues; that stretch reads SDCTSLGSPGTENSDPLSDGEGSSQTSN. Phosphotyrosine occurs at positions 270 and 296. The disordered stretch occupies residues 294–387; the sequence is RDYENVPPGP…VCAAEAGARG (94 aa). Over residues 319–329 the composition is skewed to basic and acidic residues; that stretch reads DHVEGRTDGPE. Positions 360 to 369 are enriched in acidic residues; it reads PWEDAEETSS. The residue at position 375 (Tyr-375) is a Phosphotyrosine.

In terms of assembly, when phosphorylated, interacts with GRB2, PIK3R1 and GRAP2. Phosphorylated on tyrosines upon TCR or BCR activation; which leads to the recruitment of GRB2, PIK3R1 and GRAP2.

It localises to the cell membrane. Its function is as follows. Negatively regulates TCR (T-cell antigen receptor)-mediated signaling in T-cells and BCR (B-cell antigen receptor)-mediated signaling in B-cells. This Bos taurus (Bovine) protein is Lymphocyte transmembrane adapter 1 (LAX1).